We begin with the raw amino-acid sequence, 358 residues long: Peptide chain release factor 1 (358 aa).

Q237 carries the post-translational modification N5-methylglutamine.

Belongs to the prokaryotic/mitochondrial release factor family. In terms of processing, methylated by PrmC. Methylation increases the termination efficiency of RF1.

Its subcellular location is the cytoplasm. Functionally, peptide chain release factor 1 directs the termination of translation in response to the peptide chain termination codons UAG and UAA. The chain is Peptide chain release factor 1 from Streptomyces avermitilis (strain ATCC 31267 / DSM 46492 / JCM 5070 / NBRC 14893 / NCIMB 12804 / NRRL 8165 / MA-4680).